The following is a 489-amino-acid chain: Blue-light-activated histidine kinase (489 aa).

Residues 19-93 (ATDPFRAAVE…AIKSAIAAEK (75 aa)) form the PAS domain. At C69 the chain carries S-4a-FMN cysteine. PAC domains are found at residues 93-147 (KPID…ELEK) and 232-281 (YSIE…NKAL). Residues 259 to 341 (NPLVLGIVQD…LLKENWAGAT (83 aa)) are HWE histidine kinase domain. The residue at position 288 (H288) is a Phosphohistidine; by autocatalysis.

Post-translationally, FMN binds covalently to cysteine after exposure to blue light and this bond is spontaneously broken in the dark.

The enzyme catalyses ATP + protein L-histidine = ADP + protein N-phospho-L-histidine.. In terms of biological role, photosensitive kinase that is involved in increased bacterial virulence upon exposure to light. Once ejected from an infected animal host, sunlight acts as an environmental signal that increases the virulence of the bacterium, preparing it for infection of the next host. This photoreceptor protein is directly related to the bacterium's survival and replication within host macrophages. This Brucella ovis (strain ATCC 25840 / 63/290 / NCTC 10512) protein is Blue-light-activated histidine kinase.